Here is a 520-residue protein sequence, read N- to C-terminus: Maturase K (520 aa).

This sequence belongs to the intron maturase 2 family. MatK subfamily.

It is found in the plastid. It localises to the chloroplast. Functionally, usually encoded in the trnK tRNA gene intron. Probably assists in splicing its own and other chloroplast group II introns. This Ruscus aculeatus (Butcher's broom) protein is Maturase K.